Reading from the N-terminus, the 496-residue chain is MSGLPRSVPDVLDPLGPGAPVLVAGGRVTGQAVAAVLTRFGATPTVCDDDPVMLRPHAERGLPTVSSSDAVQQITGYALVVASPGFSPATPLLAAAAAAGVPIWGDVELAWRLDAAGCYGPPRSWLVVTGTNGKTTTTSMLHAMLIAGGRRAVLCGNIGSAVLDVLDEPAELLAVELSSFQLHWAPSLRPEAGAVLNIAEDHLDWHATMAEYTAAKARVLTGGVAVAGLDDSRAAALLDGSPAQVRVGFRLGEPAAGELGVRDAHLVDRAFSDDLTLLPVASIPVPGPVGVLDALAAAALARSVGVPAGAIADAVTSFRVGRHRAEVVAVADGITYVDDSKATNPHAARASVLAYPRVVWIAGGLLKGASLHAEVAAMASRLVGAVLIGRDRAAVAEALSRHAPDVPVVQVVAGEDTGMPATVEVPVACVLDVAKDDKAGETVGAAVMTAAVAAARRMAQPGDTVLLAPAGASFDQFTGYADRGEAFATAVRAVIR.

130-136 (GTNGKTT) serves as a coordination point for ATP.

This sequence belongs to the MurCDEF family.

The protein resides in the cytoplasm. The catalysed reaction is UDP-N-acetyl-alpha-D-muramoyl-L-alanine + D-glutamate + ATP = UDP-N-acetyl-alpha-D-muramoyl-L-alanyl-D-glutamate + ADP + phosphate + H(+). It participates in cell wall biogenesis; peptidoglycan biosynthesis. In terms of biological role, cell wall formation. Catalyzes the addition of glutamate to the nucleotide precursor UDP-N-acetylmuramoyl-L-alanine (UMA). The sequence is that of UDP-N-acetylmuramoylalanine--D-glutamate ligase from Mycobacterium bovis (strain ATCC BAA-935 / AF2122/97).